The following is a 471-amino-acid chain: UDP-N-acetylmuramoylalanine--D-glutamate ligase (471 aa).

An ATP-binding site is contributed by 127 to 133 (GSNGKST).

This sequence belongs to the MurCDEF family.

Its subcellular location is the cytoplasm. It carries out the reaction UDP-N-acetyl-alpha-D-muramoyl-L-alanine + D-glutamate + ATP = UDP-N-acetyl-alpha-D-muramoyl-L-alanyl-D-glutamate + ADP + phosphate + H(+). Its pathway is cell wall biogenesis; peptidoglycan biosynthesis. Functionally, cell wall formation. Catalyzes the addition of glutamate to the nucleotide precursor UDP-N-acetylmuramoyl-L-alanine (UMA). This is UDP-N-acetylmuramoylalanine--D-glutamate ligase from Colwellia psychrerythraea (strain 34H / ATCC BAA-681) (Vibrio psychroerythus).